Consider the following 153-residue polypeptide: Facilitator of iron transport 2 (153 aa).

An N-terminal signal peptide occupies residues 1-18 (MKFSTIFGATTVMTAVSA). The disordered stretch occupies residues 73–98 (TEGPDTTSEKSTTKTLTLTNGSGSST). Positions 85–98 (TKTLTLTNGSGSST) are enriched in low complexity. Asn-92 carries N-linked (GlcNAc...) asparagine glycosylation. A lipid anchor (GPI-anchor amidated glycine) is attached at Gly-130. A propeptide spans 131–153 (AAPAAFQGASVGALALGLISYLL) (removed in mature form).

Post-translationally, the GPI-anchor is attached to the protein in the endoplasmic reticulum and serves to target the protein to the cell surface. There, the glucosamine-inositol phospholipid moiety is cleaved off and the GPI-modified mannoprotein is covalently attached via its lipidless GPI glycan remnant to the 1,6-beta-glucan of the outer cell wall layer.

The protein resides in the secreted. It is found in the cell wall. The protein localises to the membrane. Functionally, involved in the uptake of non-siderophore and siderophore sources of iron. Has a role in the retention of iron in the cell wall and periplasmic space. The polypeptide is Facilitator of iron transport 2 (FIT2) (Saccharomyces cerevisiae (strain ATCC 204508 / S288c) (Baker's yeast)).